Reading from the N-terminus, the 287-residue chain is 4-diphosphocytidyl-2-C-methyl-D-erythritol kinase (287 aa).

The active site involves lysine 14. 96–106 (PWGAGLGGGSS) contacts ATP. Residue aspartate 138 is part of the active site.

Belongs to the GHMP kinase family. IspE subfamily.

The enzyme catalyses 4-CDP-2-C-methyl-D-erythritol + ATP = 4-CDP-2-C-methyl-D-erythritol 2-phosphate + ADP + H(+). The protein operates within isoprenoid biosynthesis; isopentenyl diphosphate biosynthesis via DXP pathway; isopentenyl diphosphate from 1-deoxy-D-xylulose 5-phosphate: step 3/6. Functionally, catalyzes the phosphorylation of the position 2 hydroxy group of 4-diphosphocytidyl-2C-methyl-D-erythritol. The polypeptide is 4-diphosphocytidyl-2-C-methyl-D-erythritol kinase (Methylibium petroleiphilum (strain ATCC BAA-1232 / LMG 22953 / PM1)).